A 383-amino-acid chain; its full sequence is Acetylornithine deacetylase (383 aa).

Position 80 (His-80) interacts with Zn(2+). Asp-82 is a catalytic residue. Residue Asp-112 participates in Zn(2+) binding. Glu-144 is a catalytic residue. Glu-145, Glu-169, and His-355 together coordinate Zn(2+).

The protein belongs to the peptidase M20A family. ArgE subfamily. Homodimer. Requires Zn(2+) as cofactor. The cofactor is Co(2+). It depends on glutathione as a cofactor.

The protein resides in the cytoplasm. The enzyme catalyses N(2)-acetyl-L-ornithine + H2O = L-ornithine + acetate. It functions in the pathway amino-acid biosynthesis; L-arginine biosynthesis; L-ornithine from N(2)-acetyl-L-ornithine (linear): step 1/1. Its function is as follows. Catalyzes the hydrolysis of the amide bond of N(2)-acetylated L-amino acids. Cleaves the acetyl group from N-acetyl-L-ornithine to form L-ornithine, an intermediate in L-arginine biosynthesis pathway, and a branchpoint in the synthesis of polyamines. This chain is Acetylornithine deacetylase, found in Escherichia coli O7:K1 (strain IAI39 / ExPEC).